Here is a 570-residue protein sequence, read N- to C-terminus: Nucleoprotein (570 aa).

A binding site for the cap structure m7GTP region spans residues 54–241 (MRKDKRNDSD…IDVSKSSINV (188 aa)). Residues 342–361 (IDLSQNKQMSPAKPKGAGHG) are disordered. Mn(2+) contacts are provided by Asp-390 and Glu-392. Zn(2+)-binding residues include Glu-400, Cys-507, His-510, and Cys-530. A Mn(2+)-binding site is contributed by Asp-534.

It belongs to the arenaviridae nucleocapsid protein family. As to quaternary structure, homomultimerizes to form the nucleocapsid. Binds to viral genomic RNA. Interacts with glycoprotein G2. Interacts with protein Z; this interaction probably directs the encapsidated genome to budding sites. Interacts with protein L; this interaction does not interfere with Z-L interaction. Interacts with host IKBKE (via Protein kinase domain); the interaction inhibits IKBKE kinase activity.

Its subcellular location is the virion. It is found in the host cytoplasm. Functionally, encapsidates the genome, protecting it from nucleases. The encapsidated genomic RNA is termed the nucleocapsid (NC). Serves as template for viral transcription and replication. The increased presence of protein N in host cell does not seem to trigger the switch from transcription to replication as observed in other negative strain RNA viruses. Through the interaction with host IKBKE, strongly inhibits the phosphorylation and nuclear translocation of host IRF3, a protein involved in interferon activation pathway, leading to the inhibition of interferon-beta and IRF3-dependent promoters activation. Also encodes a functional 3'-5' exoribonuclease that degrades preferentially dsRNA substrates and thereby participates in the suppression of interferon induction. The polypeptide is Nucleoprotein (Praomys (African soft-furred rats)).